Here is a 2325-residue protein sequence, read N- to C-terminus: Protein sidekick homolog (2325 aa).

The first 26 residues, 1–26, serve as a signal peptide directing secretion; it reads MRNRLLLIFYTTTVLWTIGYTQLVLG. Residues 27–2019 are Extracellular-facing; the sequence is KPPIFQDGGS…IPDDPFYTTW (1993 aa). Ig-like C2-type domains follow at residues 28–105, 217–319, and 324–397; these read PPIF…AAIS, PSLQ…AYMT, and PILK…ADLA. Disulfide bonds link cysteine 52/cysteine 94, cysteine 247/cysteine 301, and cysteine 345/cysteine 386. A glycan (N-linked (GlcNAc...) asparagine) is linked at asparagine 407. 2 consecutive Ig-like C2-type domains span residues 456-544 and 547-638; these read PSQK…VQVN and SLIE…AMLQ. Disulfide bonds link cysteine 480-cysteine 528 and cysteine 568-cysteine 622. 6 N-linked (GlcNAc...) asparagine glycosylation sites follow: asparagine 632, asparagine 655, asparagine 807, asparagine 868, asparagine 932, and asparagine 1016. Fibronectin type-III domains are found at residues 645-751, 756-853, 858-957, 961-1055, 1059-1154, 1159-1254, 1259-1359, 1363-1457, 1463-1566, 1571-1671, 1673-1775, 1776-1872, and 1873-2004; these read MPER…MPQQ, APRN…TSEG, APKN…TEED, SVDE…VPPE, RPSM…TLQT, PSQR…TYES, SPRN…TMED, PPES…SSVR, APAP…TLPS, QPIS…VGYS, PKRN…DKPG, PVGI…SKDG, and PPPP…TEQL. A disordered region spans residues 1036-1059; that stretch reads TRKGDGPVEETKFESGVPPELPGR. A compositionally biased stretch (basic and acidic residues) spans 1037 to 1048; that stretch reads RKGDGPVEETKF. N-linked (GlcNAc...) asparagine glycosylation occurs at asparagine 1107. The segment at 1137 to 1161 is disordered; it reads KGRGAPSEPSRSFETLQTNPDTPSQ. Residues 1145–1161 are compositionally biased toward polar residues; that stretch reads PSRSFETLQTNPDTPSQ. Residue asparagine 1614 is glycosylated (N-linked (GlcNAc...) asparagine). Disordered regions lie at residues 1857-1884 and 1918-1947; these read GEQR…ITSG and PANG…ATST. N-linked (GlcNAc...) asparagine glycosylation occurs at asparagine 1863. Low complexity predominate over residues 1935-1947; it reads AKSAAQTAAATST. Residues 2020–2040 traverse the membrane as a helical segment; that stretch reads WFMALVAMGAFVLIVIIIAIL. Residues 2041-2325 are Cytoplasmic-facing; the sequence is CVTGSSAKYR…NLTTGFSSFV (285 aa). Disordered stretches follow at residues 2080–2113, 2164–2187, 2202–2226, and 2285–2325; these read NMTR…SVLG, TAYV…PTRS, RGHI…LQQP, and ILTG…SSFV. The segment covering 2091-2100 has biased composition (polar residues); it reads PGTTQSWVSD. Low complexity predominate over residues 2215-2226; the sequence is GSQPQGSPLQQP. 2 stretches are compositionally biased toward polar residues: residues 2294–2305 and 2313–2325; these read AGRSSTTDSTSE and ATPN…SSFV.

The protein belongs to the sidekick family.

It localises to the membrane. Cell adhesion protein. The sequence is that of Protein sidekick homolog (rig-4) from Caenorhabditis elegans.